We begin with the raw amino-acid sequence, 531 residues long: 2,3-bisphosphoglycerate-independent phosphoglycerate mutase (531 aa).

Aspartate 13 and serine 63 together coordinate Mn(2+). The active-site Phosphoserine intermediate is the serine 63. Residues histidine 124, 154-155 (RD), arginine 187, arginine 193, 261-264 (RPDR), and lysine 342 contribute to the substrate site. 5 residues coordinate Mn(2+): aspartate 420, histidine 424, aspartate 462, histidine 463, and histidine 480.

This sequence belongs to the BPG-independent phosphoglycerate mutase family. As to quaternary structure, monomer. It depends on Mn(2+) as a cofactor.

It carries out the reaction (2R)-2-phosphoglycerate = (2R)-3-phosphoglycerate. It functions in the pathway carbohydrate degradation; glycolysis; pyruvate from D-glyceraldehyde 3-phosphate: step 3/5. Functionally, catalyzes the interconversion of 2-phosphoglycerate and 3-phosphoglycerate. This chain is 2,3-bisphosphoglycerate-independent phosphoglycerate mutase, found in Mycoplasma capricolum subsp. capricolum (strain California kid / ATCC 27343 / NCTC 10154).